The chain runs to 30 residues: Agglutinin alpha-1 chain (30 aa).

A Jacalin-type lectin domain is found at 1 to 30; sequence GVAFDDGSYTGIREINFEYNRETAIGGXQV.

This sequence belongs to the jacalin lectin family. Tetramer of four alpha chains associated with two or four beta chains.

Its function is as follows. N-acetyl-galactosamine and D-galactose specific lectin. Binds the Tn-antigen structure GalNAc-alpha-1-O-Ser, the T-antigen structure Gal-beta1-3-GalNAc and IgA. This is Agglutinin alpha-1 chain from Morus nigra (Black mulberry).